Here is a 106-residue protein sequence, read N- to C-terminus: CLAVATA3/ESR (CLE)-related protein 21 (106 aa).

The N-terminal stretch at 1–31 (MLILSSRYAMKRDVLIIVIFTVLVLIIISRS) is a signal peptide. An N-linked (GlcNAc...) asparagine glycan is attached at Asn47. The span at 72–82 (KVRRRSSRFRR) shows a compositional bias: basic residues. Residues 72-106 (KVRRRSSRFRRKTDGDEEEEEKRSIPTGPNPLHNK) are disordered. Residues Pro97 and Pro100 each carry the hydroxyproline modification. The O-linked (Ara...) hydroxyproline glycan is linked to Pro100.

It belongs to the CLV3/ESR signal peptide family. The O-glycosylation (arabinosylation) of the hydroxyproline Pro-100 enhances binding affinity of the CLE21p peptide for its receptor. Mostly expressed in leaves and apex, and, to a lower extent, in seedlings, flowers, stems and siliques.

The protein resides in the secreted. It is found in the extracellular space. Its function is as follows. Extracellular signal peptide that regulates cell fate. Represses root apical meristem maintenance. Regulates the transition of protophloem cells from proliferation to differentiation, thus impinging on postembryonic growth capacity of the root meristem; this signaling pathway requires CRN and CLV2. The sequence is that of CLAVATA3/ESR (CLE)-related protein 21 from Arabidopsis thaliana (Mouse-ear cress).